The chain runs to 57 residues: Small nuclear protein PRAC1 (57 aa).

Residues 38-57 form a disordered region; that stretch reads RSDGSACNSGISGGRGRKIP.

As to expression, highly expressed in prostate, rectum, and distal colon, and weakly expressed in bladder. Expressed in prostate cancer cell lines.

The protein resides in the nucleus. This Homo sapiens (Human) protein is Small nuclear protein PRAC1 (PRAC1).